We begin with the raw amino-acid sequence, 305 residues long: Acetaldehyde dehydrogenase (305 aa).

The active-site Acyl-thioester intermediate is Cys130. NAD(+) contacts are provided by residues 161–169 and Asn272; that span reads SVGPGTRKN.

Belongs to the acetaldehyde dehydrogenase family.

It carries out the reaction acetaldehyde + NAD(+) + CoA = acetyl-CoA + NADH + H(+). This chain is Acetaldehyde dehydrogenase, found in Leptothrix cholodnii (strain ATCC 51168 / LMG 8142 / SP-6) (Leptothrix discophora (strain SP-6)).